The following is a 703-amino-acid chain: Cycloartenol synthase (703 aa).

PFTB repeat units lie at residues 59-103 (IKKA…QLPE) and 106-148 (QREI…RLLG). Residue aspartate 435 is the Proton donor of the active site. 4 PFTB repeats span residues 461–503 (IADG…QNIM), 539–579 (IARG…VASG), 587–628 (IVKA…VNTG), and 645–686 (IERG…KNIF).

The protein belongs to the terpene cyclase/mutase family.

It catalyses the reaction (S)-2,3-epoxysqualene = cycloartenol. Functionally, converts oxidosqualene to cycloartenol (in vitro). This is Cycloartenol synthase (cas1) from Dictyostelium discoideum (Social amoeba).